Consider the following 341-residue polypeptide: MEQNGSFRVDSEFRYTLFPIVYSVIFVLGVVANGYVLWVFATLYPSKKLNEIKIFMVNLTVADLLFLMTLPLWIVYYSNEGDWIVHKFLCNLAGCLFFINTYCSVAFLGVITYNRYQAVAYPIKTAQATTRKRGITLSLVIWISIAATASYFLATDSTNVVPKKDGSGNITRCFEHYEPYSVPILVVHIFITSCFFLVFFLIFYCNMVIIHTLLTRPVRQQRKPEVKRRALWMVCTVLAVFVICFVPHHVVQLPWTLAELGYQTNFHQAINDAHQITLCLLSTNCVLDPVIYCFLTKKFRKHLSEKFYSMRSSRKCSRATSDTCTEVMMPANQTPVLPLKN.

Residues 1–16 (MEQNGSFRVDSEFRYT) lie on the Extracellular side of the membrane. Asn-4 is a glycosylation site (N-linked (GlcNAc...) asparagine). The chain crosses the membrane as a helical span at residues 17–38 (LFPIVYSVIFVLGVVANGYVLW). The Cytoplasmic portion of the chain corresponds to 39–54 (VFATLYPSKKLNEIKI). The helical transmembrane segment at 55-74 (FMVNLTVADLLFLMTLPLWI) threads the bilayer. At 75-91 (VYYSNEGDWIVHKFLCN) the chain is on the extracellular side. Cys-90 and Cys-173 are oxidised to a cystine. The chain crosses the membrane as a helical span at residues 92 to 113 (LAGCLFFINTYCSVAFLGVITY). At 114-133 (NRYQAVAYPIKTAQATTRKR) the chain is on the cytoplasmic side. Residues 134–155 (GITLSLVIWISIAATASYFLAT) form a helical membrane-spanning segment. The Extracellular portion of the chain corresponds to 156 to 184 (DSTNVVPKKDGSGNITRCFEHYEPYSVPI). An N-linked (GlcNAc...) asparagine glycan is attached at Asn-169. A helical membrane pass occupies residues 185-205 (LVVHIFITSCFFLVFFLIFYC). At 206–233 (NMVIIHTLLTRPVRQQRKPEVKRRALWM) the chain is on the cytoplasmic side. The helical transmembrane segment at 234–254 (VCTVLAVFVICFVPHHVVQLP) threads the bilayer. Residues 255-275 (WTLAELGYQTNFHQAINDAHQ) lie on the Extracellular side of the membrane. The chain crosses the membrane as a helical span at residues 276–295 (ITLCLLSTNCVLDPVIYCFL). The Cytoplasmic segment spans residues 296-341 (TKKFRKHLSEKFYSMRSSRKCSRATSDTCTEVMMPANQTPVLPLKN).

Belongs to the G-protein coupled receptor 1 family. As to quaternary structure, interacts with ARRB1. Present in almost all organs including spleen, small intestine, kidney, lung, liver and brain.

The protein resides in the cell membrane. Functionally, receptor for platelet activating factor, a chemotactic phospholipid mediator that possesses potent inflammatory, smooth-muscle contractile and hypotensive activity. Seems to mediate its action via a G protein that activates a phosphatidylinositol-calcium second messenger system. The protein is Platelet-activating factor receptor (Ptafr) of Rattus norvegicus (Rat).